The sequence spans 133 residues: Large ribosomal subunit protein bL12 (133 aa).

It belongs to the bacterial ribosomal protein bL12 family. As to quaternary structure, homodimer. Part of the ribosomal stalk of the 50S ribosomal subunit. Forms a multimeric L10(L12)X complex, where L10 forms an elongated spine to which 2 to 4 L12 dimers bind in a sequential fashion. Binds GTP-bound translation factors.

Its function is as follows. Forms part of the ribosomal stalk which helps the ribosome interact with GTP-bound translation factors. Is thus essential for accurate translation. The protein is Large ribosomal subunit protein bL12 of Ehrlichia chaffeensis (strain ATCC CRL-10679 / Arkansas).